A 413-amino-acid polypeptide reads, in one-letter code: CinA-like protein (413 aa).

This sequence belongs to the CinA family.

The protein is CinA-like protein of Desulfotalea psychrophila (strain LSv54 / DSM 12343).